A 1367-amino-acid polypeptide reads, in one-letter code: Dynactin, 150 kDa isoform (1367 aa).

The region spanning 28–70 (GETAFAPGTWVGIELDEPSGKNDGSVQGERYFNCEMGYGMFVR) is the CAP-Gly domain. Positions 76-318 (VIAQPPPPPP…NLKATTITPR (243 aa)) are disordered. 2 stretches are compositionally biased toward low complexity: residues 88 to 99 (TFRRSVTTRPTS) and 132 to 149 (PSRT…RSPT). Polar residues predominate over residues 150–163 (KQLATASSSGNPSR). 2 stretches are compositionally biased toward low complexity: residues 164–190 (SGTP…SRHS) and 243–259 (STGS…KRGS). Coiled coils occupy residues 321–598 (ITNT…MQEE), 637–698 (LQSD…EAEQ), and 1039–1199 (AELK…RARL).

The protein belongs to the dynactin 150 kDa subunit family. Large macromolecular complex of at least 10 components; p150(glued) binds directly to microtubules and to cytoplasmic dynein.

The protein resides in the cytoplasm. It is found in the cytoskeleton. Functionally, required for the cytoplasmic dynein-driven retrograde movement of vesicles and organelles along microtubules. Dynein-dynactin interaction is a key component of the mechanism of axonal transport of vesicles and organelles. This Neurospora crassa (strain ATCC 24698 / 74-OR23-1A / CBS 708.71 / DSM 1257 / FGSC 987) protein is Dynactin, 150 kDa isoform (ro-3).